Here is a 361-residue protein sequence, read N- to C-terminus: tRNA-specific 2-thiouridylase MnmA (361 aa).

Residues 6 to 13 and leucine 32 each bind ATP; that span reads AMSGGVDS. Residue cysteine 101 is the Nucleophile of the active site. An intrachain disulfide couples cysteine 101 to cysteine 194. Residue glycine 125 coordinates ATP. The interaction with tRNA stretch occupies residues 144–146; that stretch reads KDQ. The active-site Cysteine persulfide intermediate is cysteine 194.

It belongs to the MnmA/TRMU family.

The protein resides in the cytoplasm. It catalyses the reaction S-sulfanyl-L-cysteinyl-[protein] + uridine(34) in tRNA + AH2 + ATP = 2-thiouridine(34) in tRNA + L-cysteinyl-[protein] + A + AMP + diphosphate + H(+). Catalyzes the 2-thiolation of uridine at the wobble position (U34) of tRNA, leading to the formation of s(2)U34. The sequence is that of tRNA-specific 2-thiouridylase MnmA from Corynebacterium aurimucosum (strain ATCC 700975 / DSM 44827 / CIP 107346 / CN-1) (Corynebacterium nigricans).